Reading from the N-terminus, the 687-residue chain is Probable intron-encoded endonuclease aI3 (687 aa).

The interval 1-374 (MKQMSYVTRW…NASMDVAFHD (374 aa)) is COX1 exons 1 to 3 encoded. A run of 10 helical transmembrane segments spans residues 19-39 (IGMTYLGFGMLSAMMGTGMSV), 69-89 (LLMMFFFIMPVWMGAFGNFFL), 103-123 (LNNISFWCLPPALVCMVCSVL), 152-172 (AMFAMHLTSMSSLLGAMNFMV), 188-208 (PLFAWAMFLTAMLLLLSLPVL), 240-260 (LFWFFGHPEVYILMMPGFGVM), 273-293 (FGEMGMLYAMGSIGFLGFLVW), 315-335 (MVIAVPTGIKIFSWLATIYGG), 341-361 (VPMLFALGFLFLFTMGGLTGV), and 376-396 (IFIYYVSFFLYTLYNMYNNYT). Positions 375–687 (RIFIYYVSFF…KKESLMKFLK (313 aa)) are COX1 intron 3 encoded.

The protein in the C-terminal section; belongs to the LAGLIDADG endonuclease family. It in the N-terminal section; belongs to the heme-copper respiratory oxidase family. In terms of processing, the mature protein may arise from proteolytic cleavage of an in-frame translation of COX1 exons 1 to 3 plus intron 3, containing the aI3 open reading frame.

It localises to the mitochondrion. The protein resides in the membrane. Its function is as follows. Mitochondrial DNA endonuclease involved in intron homing. In Debaryomyces hansenii (strain ATCC 36239 / CBS 767 / BCRC 21394 / JCM 1990 / NBRC 0083 / IGC 2968) (Yeast), this protein is Probable intron-encoded endonuclease aI3 (aI3).